The chain runs to 92 residues: mRNA interferase toxin YafQ (92 aa).

The active-site Proton donor is His-87.

It belongs to the RelE toxin family. YafQ subfamily. As to quaternary structure, monomer in the absence of antitoxin. Forms a heterotetramer with antitoxin DinJ, with 2 YafQ-DinJ dimers associated via the N-terminus of the DinJ antitoxins (YafQ-(DinJ)2-YafQ). In this complex the toxin activity is inhibited. Binds the 70S ribosome via the 50S ribosomal subunit.

Toxic component of a type II toxin-antitoxin (TA) system. A sequence-specific mRNA endoribonuclease that inhibits translation elongation and induces bacterial stasis. Cleavage occurs between the second and third residue of the Lys codon followed by a G or A (5'AAA(G/A)3'), is reading-frame dependent and occurs within the 5' end of most mRNAs. Ribosome-binding confers the sequence specificity and reading frame-dependence. When overexpressed in liquid media YafQ partially inhibits protein synthesis, with a reduction in growth rate and colony growth rate. This effect is counteracted by coexpression with cognate antitoxin DinJ. YafQ and DinJ together bind their own promoter, and repress its expression. Functionally, cell death governed by the MazE-MazF and DinJ-YafQ TA systems seems to play a role in biofilm formation. The chain is mRNA interferase toxin YafQ (yafQ) from Escherichia coli (strain K12).